Here is a 336-residue protein sequence, read N- to C-terminus: Fructose-1,6-bisphosphatase class 1 (336 aa).

The Mg(2+) site is built by glutamate 92, aspartate 115, leucine 117, and aspartate 118. Residues 118 to 121 (DGSS), asparagine 211, tyrosine 244, 262 to 264 (YLY), and lysine 274 contribute to the substrate site. Residue glutamate 280 participates in Mg(2+) binding.

The protein belongs to the FBPase class 1 family. As to quaternary structure, homotetramer. The cofactor is Mg(2+).

It is found in the cytoplasm. The catalysed reaction is beta-D-fructose 1,6-bisphosphate + H2O = beta-D-fructose 6-phosphate + phosphate. The protein operates within carbohydrate biosynthesis; gluconeogenesis. In Aliivibrio fischeri (strain ATCC 700601 / ES114) (Vibrio fischeri), this protein is Fructose-1,6-bisphosphatase class 1.